The primary structure comprises 214 residues: Small ribosomal subunit protein uS3c (214 aa).

Residues 39–111 enclose the KH type-2 domain; it reads IRTYLNKLAK…QLTINIIEVE (73 aa).

Belongs to the universal ribosomal protein uS3 family. In terms of assembly, part of the 30S ribosomal subunit.

It is found in the plastid. The protein localises to the chloroplast. The sequence is that of Small ribosomal subunit protein uS3c (rps3) from Trieres chinensis (Marine centric diatom).